Consider the following 312-residue polypeptide: Acetyl-coenzyme A carboxylase carboxyl transferase subunit beta (312 aa).

Residues 24–293 (LWIKCPDSGQ…VEHAKPAPQL (270 aa)) enclose the CoA carboxyltransferase N-terminal domain. The tract at residues 286 to 312 (HAKPAPQLPPPAKPAETAEAPAVATSA) is disordered. The segment covering 299–312 (PAETAEAPAVATSA) has biased composition (low complexity).

The protein belongs to the AccD/PCCB family. In terms of assembly, acetyl-CoA carboxylase is a heterohexamer composed of biotin carboxyl carrier protein (AccB), biotin carboxylase (AccC) and two subunits each of ACCase subunit alpha (AccA) and ACCase subunit beta (AccD).

It is found in the cytoplasm. It carries out the reaction N(6)-carboxybiotinyl-L-lysyl-[protein] + acetyl-CoA = N(6)-biotinyl-L-lysyl-[protein] + malonyl-CoA. It functions in the pathway lipid metabolism; malonyl-CoA biosynthesis; malonyl-CoA from acetyl-CoA: step 1/1. Functionally, component of the acetyl coenzyme A carboxylase (ACC) complex. Biotin carboxylase (BC) catalyzes the carboxylation of biotin on its carrier protein (BCCP) and then the CO(2) group is transferred by the transcarboxylase to acetyl-CoA to form malonyl-CoA. The sequence is that of Acetyl-coenzyme A carboxylase carboxyl transferase subunit beta from Bradyrhizobium sp. (strain ORS 278).